A 449-amino-acid polypeptide reads, in one-letter code: Bifunctional protein GlmU (449 aa).

A pyrophosphorylase region spans residues 1 to 225 (MLSVAILAAG…NGELQGINNR (225 aa)). UDP-N-acetyl-alpha-D-glucosamine is bound by residues 7-10 (LAAG), lysine 21, glutamine 73, and 78-79 (GT). Aspartate 103 contacts Mg(2+). Glycine 140, glutamate 154, asparagine 169, and asparagine 223 together coordinate UDP-N-acetyl-alpha-D-glucosamine. A Mg(2+)-binding site is contributed by asparagine 223. The segment at 226 to 246 (IQLSKCEEIIQNSIKEKHMLN) is linker. The segment at 247-449 (GVTFINQASC…NIDNWERKKP (203 aa)) is N-acetyltransferase. 2 residues coordinate UDP-N-acetyl-alpha-D-glucosamine: arginine 328 and lysine 346. Residue histidine 358 is the Proton acceptor of the active site. Positions 361 and 372 each coordinate UDP-N-acetyl-alpha-D-glucosamine. The acetyl-CoA site is built by alanine 375, alanine 418, and arginine 435.

In the N-terminal section; belongs to the N-acetylglucosamine-1-phosphate uridyltransferase family. This sequence in the C-terminal section; belongs to the transferase hexapeptide repeat family. Homotrimer. Requires Mg(2+) as cofactor.

It localises to the cytoplasm. It catalyses the reaction alpha-D-glucosamine 1-phosphate + acetyl-CoA = N-acetyl-alpha-D-glucosamine 1-phosphate + CoA + H(+). The catalysed reaction is N-acetyl-alpha-D-glucosamine 1-phosphate + UTP + H(+) = UDP-N-acetyl-alpha-D-glucosamine + diphosphate. It participates in nucleotide-sugar biosynthesis; UDP-N-acetyl-alpha-D-glucosamine biosynthesis; N-acetyl-alpha-D-glucosamine 1-phosphate from alpha-D-glucosamine 6-phosphate (route II): step 2/2. Its pathway is nucleotide-sugar biosynthesis; UDP-N-acetyl-alpha-D-glucosamine biosynthesis; UDP-N-acetyl-alpha-D-glucosamine from N-acetyl-alpha-D-glucosamine 1-phosphate: step 1/1. It functions in the pathway bacterial outer membrane biogenesis; LPS lipid A biosynthesis. In terms of biological role, catalyzes the last two sequential reactions in the de novo biosynthetic pathway for UDP-N-acetylglucosamine (UDP-GlcNAc). The C-terminal domain catalyzes the transfer of acetyl group from acetyl coenzyme A to glucosamine-1-phosphate (GlcN-1-P) to produce N-acetylglucosamine-1-phosphate (GlcNAc-1-P), which is converted into UDP-GlcNAc by the transfer of uridine 5-monophosphate (from uridine 5-triphosphate), a reaction catalyzed by the N-terminal domain. The polypeptide is Bifunctional protein GlmU (Prochlorococcus marinus (strain MIT 9312)).